The chain runs to 485 residues: Aspartyl/glutamyl-tRNA(Asn/Gln) amidotransferase subunit B (485 aa).

Belongs to the GatB/GatE family. GatB subfamily. As to quaternary structure, heterotrimer of A, B and C subunits.

It catalyses the reaction L-glutamyl-tRNA(Gln) + L-glutamine + ATP + H2O = L-glutaminyl-tRNA(Gln) + L-glutamate + ADP + phosphate + H(+). The catalysed reaction is L-aspartyl-tRNA(Asn) + L-glutamine + ATP + H2O = L-asparaginyl-tRNA(Asn) + L-glutamate + ADP + phosphate + 2 H(+). Functionally, allows the formation of correctly charged Asn-tRNA(Asn) or Gln-tRNA(Gln) through the transamidation of misacylated Asp-tRNA(Asn) or Glu-tRNA(Gln) in organisms which lack either or both of asparaginyl-tRNA or glutaminyl-tRNA synthetases. The reaction takes place in the presence of glutamine and ATP through an activated phospho-Asp-tRNA(Asn) or phospho-Glu-tRNA(Gln). This chain is Aspartyl/glutamyl-tRNA(Asn/Gln) amidotransferase subunit B, found in Bordetella petrii (strain ATCC BAA-461 / DSM 12804 / CCUG 43448).